Reading from the N-terminus, the 381-residue chain is Ceropsin (381 aa).

The Extracellular portion of the chain corresponds to 1 to 62; it reads MSISMDAGPG…MNPLWHALLG (62 aa). The N-linked (GlcNAc...) asparagine glycan is linked to Asn28. Residues 63 to 83 form a helical membrane-spanning segment; it reads FTIGVLGFISMMGNGMVIYIF. Residues 84 to 96 are Cytoplasmic-facing; it reads MTTKNLKTPSNLL. Residues 97–117 form a helical membrane-spanning segment; sequence VVNLAFSDFLMMCAMSPAMVI. Topologically, residues 118–133 are extracellular; that stretch reads NCYNETWVFGPFACEL. An N-linked (GlcNAc...) asparagine glycan is attached at Asn121. Cysteines 131 and 208 form a disulfide. The helical transmembrane segment at 134 to 154 threads the bilayer; sequence YGCAGSLFGCASIWTMTMIAF. Over 155–173 the chain is Cytoplasmic; it reads DRYNVIVKGIAAKPMTNNG. A helical transmembrane segment spans residues 174–194; it reads ALLRILGIWAFSLAWTVAPFF. Over 195-221 the chain is Extracellular; it reads GWNRYVPEGNMTACGTDYLTKDWFSRS. Asn204 carries an N-linked (GlcNAc...) asparagine glycan. Residues 222–242 form a helical membrane-spanning segment; the sequence is YIVVYSVFVYFAPLLLIVYSY. At 243–284 the chain is on the cytoplasmic side; that stretch reads YYIVQAVSAHEKAMREQAKKMNVASLRSSEAANTSTECKLAK. A helical membrane pass occupies residues 285–305; sequence VALMTISLWFMAWTPYLVINY. Residues 306–316 are Extracellular-facing; that stretch reads TGILESAPISP. Residues 317-339 form a helical membrane-spanning segment; the sequence is LATIWGSLFAKANAVYNPIVYGI. At 340–381 the chain is on the cytoplasmic side; the sequence is SHPKYQAALYKRFPVLQCHSTTTDEASSVASGTTVMEEKPTA.

It belongs to the G-protein coupled receptor 1 family. Opsin subfamily. As to expression, expressed bilaterally in dorsal and ventral anterior protocerebral cells and bilaterally in the dorsal posterior protocerebral and lateral posterior tritocerebral cells (at protein level). Expressed in the larval brain but not in the subesophageal ganglion or thoracic ganglion.

The protein localises to the membrane. Its function is as follows. Visual pigments are the light-absorbing molecules that mediate vision. They consist of an apoprotein, opsin, covalently linked to cis-retinal. May play a role in photoperiodic photoreception. The chain is Ceropsin from Bombyx mori (Silk moth).